We begin with the raw amino-acid sequence, 548 residues long: Telomerase Cajal body protein 1 (548 aa).

Residues 1 to 142 (MKTLETQPLA…SGEPAAEDEG (142 aa)) form a disordered region. The segment covering 15-31 (PSDQDPAPAHPSPHASP) has biased composition (low complexity). Phosphoserine is present on residues serine 26, serine 30, and serine 54. Residue serine 64 is modified to Phosphoserine; by ATM. Phosphoserine is present on residues serine 85, serine 90, serine 112, and serine 114. WD repeat units lie at residues 167-206 (QPEN…YHEG), 222-267 (EGDT…LRAS), 272-313 (NHLD…RDCE), 323-364 (GQSG…ALLG), 365-405 (GHQG…YPLW), and 411-450 (VTTN…NDGK). A Phosphothreonine modification is found at threonine 489. Serine 491 carries the phosphoserine modification. A disordered region spans residues 526-548 (SIPDDHQGEKGQGGTEGGVGELI). The span at 535–548 (KGQGGTEGGVGELI) shows a compositional bias: gly residues.

Belongs to the TCAB1 family. In terms of assembly, component of the telomerase holoenzyme complex composed of one molecule of TERT, one molecule of WRAP53/TCAB1, two molecules of H/ACA ribonucleoprotein complex subunits DKC1, NOP10, NHP2 and GAR1, and a telomerase RNA template component (TERC). The telomerase holoenzyme complex is associated with TEP1, SMG6/EST1A and POT1. Interacts with the chaperonin-containing T-complex (TRiC) complex; which mediates the folding of WRAP53/TCAB1. Interacts with COIL. Interacts with SMN1. Interacts with RNF8. Interacts with histone H2AX. In terms of processing, phosphorylated at Ser-64 by ATM in response to DNA damage, promoting its interaction with histone H2AX and localization to sites of DNA double-strand breaks. Expressed in all tissues and cell lines examined.

It is found in the nucleus. The protein localises to the cajal body. Its subcellular location is the chromosome. The protein resides in the telomere. RNA chaperone that plays a key role in telomere maintenance and RNA localization to Cajal bodies. Specifically recognizes and binds the Cajal body box (CAB box) present in both small Cajal body RNAs (scaRNAs) and telomerase RNA template component (TERC). Essential component of the telomerase holoenzyme complex, a ribonucleoprotein complex essential for the replication of chromosome termini that elongates telomeres in most eukaryotes. In the telomerase holoenzyme complex, required to stimulate the catalytic activity of the complex. Acts by specifically binding the CAB box of the TERC RNA and controlling the folding of the CR4/CR5 region of the TERC RNA, a critical step for telomerase activity. In addition, also controls telomerase holoenzyme complex localization to Cajal body. During S phase, required for delivery of TERC to telomeres during S phase and for telomerase activity. In addition to its role in telomere maintenance, also required for Cajal body formation, probably by mediating localization of scaRNAs to Cajal bodies. Also plays a role in DNA repair: phosphorylated by ATM in response to DNA damage and relocalizes to sites of DNA double-strand breaks to promote the repair of DNA double-strand breaks. Acts by recruiting the ubiquitin ligase RNF8 to DNA breaks and promote both homologous recombination (HR) and non-homologous end joining (NHEJ). This chain is Telomerase Cajal body protein 1, found in Homo sapiens (Human).